The primary structure comprises 37 residues: Large ribosomal subunit protein bL36 (37 aa).

Belongs to the bacterial ribosomal protein bL36 family.

This chain is Large ribosomal subunit protein bL36, found in Geobacillus kaustophilus (strain HTA426).